The chain runs to 355 residues: Small ribosomal subunit protein uS2 (355 aa).

It belongs to the universal ribosomal protein uS2 family.

This is Small ribosomal subunit protein uS2 from Methylobacterium radiotolerans (strain ATCC 27329 / DSM 1819 / JCM 2831 / NBRC 15690 / NCIMB 10815 / 0-1).